We begin with the raw amino-acid sequence, 492 residues long: Katanin p60 ATPase-containing subunit A1 (492 aa).

The interval Pro-91 to Lys-158 is disordered. Over residues Leu-138–Val-147 the composition is skewed to polar residues. Gly-250–Thr-257 is an ATP binding site.

The protein belongs to the AAA ATPase family. Katanin p60 subunit A1 subfamily. Can homooligomerize into hexameric rings, which may be promoted by interaction with microtubules. Interacts with katnb1, which may serve as a targeting subunit.

Its subcellular location is the cytoplasm. The protein localises to the cytoskeleton. It localises to the microtubule organizing center. The protein resides in the centrosome. It is found in the spindle pole. Its subcellular location is the spindle. It carries out the reaction n ATP + n H2O + a microtubule = n ADP + n phosphate + (n+1) alpha/beta tubulin heterodimers.. ATPase activity is stimulated by microtubules, which promote homooligomerization. ATP-dependent microtubule severing is stimulated by interaction with katnb1. Its function is as follows. Catalytic subunit of a complex which severs microtubules in an ATP-dependent manner. Microtubule severing may promote rapid reorganization of cellular microtubule arrays and the release of microtubules from the centrosome following nucleation. In Xenopus tropicalis (Western clawed frog), this protein is Katanin p60 ATPase-containing subunit A1 (katna1).